The primary structure comprises 511 residues: Cytochrome P450 71A6 (511 aa).

2 consecutive transmembrane segments (helical) span residues I1–L15 and V61–P77. N90, N96, and N167 each carry an N-linked (GlcNAc...) asparagine glycan. C450 contacts heme.

Belongs to the cytochrome P450 family. The cofactor is heme.

The protein localises to the membrane. The chain is Cytochrome P450 71A6 (CYP71A6) from Nepeta racemosa (Catmint).